The primary structure comprises 159 residues: Ribosomal RNA large subunit methyltransferase H (159 aa).

S-adenosyl-L-methionine is bound by residues L76, G108, and 127–132; that span reads FSPMTF.

The protein belongs to the RNA methyltransferase RlmH family. In terms of assembly, homodimer.

The protein resides in the cytoplasm. It carries out the reaction pseudouridine(1915) in 23S rRNA + S-adenosyl-L-methionine = N(3)-methylpseudouridine(1915) in 23S rRNA + S-adenosyl-L-homocysteine + H(+). Functionally, specifically methylates the pseudouridine at position 1915 (m3Psi1915) in 23S rRNA. This chain is Ribosomal RNA large subunit methyltransferase H, found in Alkaliphilus oremlandii (strain OhILAs) (Clostridium oremlandii (strain OhILAs)).